A 153-amino-acid chain; its full sequence is Melatonin receptor type 1A X2.0 (153 aa).

Topologically, residues 1–12 (HSSWYNRLFSNS) are cytoplasmic. The chain crosses the membrane as a helical span at residues 13-33 (GTICYVGLVWVLALGAILPNL). The Extracellular portion of the chain corresponds to 34-57 (FVGSLRCDPRIFSCTFAQYVSSYY). A helical membrane pass occupies residues 58-78 (TIAVVIFHFFLPIGVVSYCYL). Topologically, residues 79–112 (RIWVLVLNIRHRVKPDRHLHHQTWPYNIHGFITM) are cytoplasmic. The helical transmembrane segment at 113 to 133 (FVVFVLFAVCWGPLNIIGLTV) threads the bilayer. Over 134 to 145 (AIYPPLGDSIPQ) the chain is Extracellular. Residues 146–153 (WLFVASYF) traverse the membrane as a helical segment.

This sequence belongs to the G-protein coupled receptor 1 family.

It localises to the cell membrane. In terms of biological role, high affinity receptor for melatonin. The activity of this receptor is mediated by pertussis toxin sensitive G proteins that inhibits adenylate cyclase activity. The protein is Melatonin receptor type 1A X2.0 of Xenopus laevis (African clawed frog).